We begin with the raw amino-acid sequence, 450 residues long: UDP-N-acetylmuramoylalanine--D-glutamate ligase (450 aa).

119–125 is an ATP binding site; the sequence is GSNGKTT.

The protein belongs to the MurCDEF family.

The protein resides in the cytoplasm. It catalyses the reaction UDP-N-acetyl-alpha-D-muramoyl-L-alanine + D-glutamate + ATP = UDP-N-acetyl-alpha-D-muramoyl-L-alanyl-D-glutamate + ADP + phosphate + H(+). It functions in the pathway cell wall biogenesis; peptidoglycan biosynthesis. Its function is as follows. Cell wall formation. Catalyzes the addition of glutamate to the nucleotide precursor UDP-N-acetylmuramoyl-L-alanine (UMA). This Streptococcus gordonii (strain Challis / ATCC 35105 / BCRC 15272 / CH1 / DL1 / V288) protein is UDP-N-acetylmuramoylalanine--D-glutamate ligase.